A 164-amino-acid chain; its full sequence is MSTKTNSTKATSEKTDSLKTNRGTKSSAGYSDQNIPLGGCILADTPITFNENKPVTKVKVRNTGDRPIQVGSHFHFFEANRALEFDRAAAYGKRLNISSTTAIRFEPGDETEVPLIPFGGKQTLYGFNNLVDGWTGEGVVPNSERPDKLEAIRRAAERGFKSSK.

2 stretches are compositionally biased toward polar residues: residues 1-10 (MSTKTNSTKA) and 20-30 (TNRGTKSSAGY). A disordered region spans residues 1–30 (MSTKTNSTKATSEKTDSLKTNRGTKSSAGY).

This sequence belongs to the urease beta subunit family. As to quaternary structure, heterotrimer of UreA (gamma), UreB (beta) and UreC (alpha) subunits. Three heterotrimers associate to form the active enzyme.

It is found in the cytoplasm. The catalysed reaction is urea + 2 H2O + H(+) = hydrogencarbonate + 2 NH4(+). It participates in nitrogen metabolism; urea degradation; CO(2) and NH(3) from urea (urease route): step 1/1. Expression of the urease operon increases the likelihood of bacterial survival by contributing to acid resistance in vitro and in vivo in BALB/c mice. Y.enterocolitica enters the body via an oral path and must survive the acidic stomach before being able to colonize the intestinal mucosa. In Yersinia enterocolitica, this protein is Urease subunit beta.